Here is a 362-residue protein sequence, read N- to C-terminus: MAMVPSGSGGGPPVIAEVEMNGGADSGAATVRATVVQASTVFYDTPATLDKAERLIEEAAGYGSQLVVFPEAFVGGYPRGSTFGFGANISIGNPKDKGKEEFRKYHAAAIEVPGPEVTRLAAMAGKYKVFLVMGVIEREGYTLYCSVLFFDPLGRYLGKHRKLMPTALERIIWGFGDGSTIPVYDTPLGKIGALICWENKMPLLRTALYGKGIEIYCAPTADSRQVWQASMTHIALEGGCFVLSANQFCRRKDYPPPPEYVFSGLGEEPSPDTVVCPGGSVIISPSGEVLAGPNYEGEALITADLDLGEIVRAKFDFDVVGHYARPEVLSLVVNDQPHLPVSFTSAAEKTTAAKSDSTAKPY.

A CN hydrolase domain is found at 31-307 (VRATVVQAST…EALITADLDL (277 aa)). Residue E71 is the Proton acceptor of the active site. The Proton donor role is filled by K162. The active-site Nucleophile is the C196.

It belongs to the carbon-nitrogen hydrolase superfamily. Nitrilase family.

The enzyme catalyses a nitrile + 2 H2O = a carboxylate + NH4(+). It carries out the reaction 3-cyano-L-alanine + 2 H2O = L-aspartate + NH4(+). Its function is as follows. Highly specific for beta-cyano-L-alanine (Ala(CN)). Low activity with 3-phenylpropionitrile (PPN). Not associated with auxin production but may be involved in cyanide detoxification. The chain is Bifunctional nitrilase/nitrile hydratase NIT4 (NIT4) from Oryza sativa subsp. japonica (Rice).